The primary structure comprises 181 residues: DNA-packaging protein NU1 homolog (181 aa).

It to phage lambda DNA packaging protein NU1.

This is DNA-packaging protein NU1 homolog (nohD) from Escherichia coli (strain K12).